Reading from the N-terminus, the 95-residue chain is Small ribosomal subunit protein bS20c (95 aa).

This sequence belongs to the bacterial ribosomal protein bS20 family.

The protein resides in the plastid. It localises to the chloroplast. In terms of biological role, binds directly to 16S ribosomal RNA. This Pyropia yezoensis (Susabi-nori) protein is Small ribosomal subunit protein bS20c.